The chain runs to 471 residues: Argininosuccinate lyase (471 aa).

This sequence belongs to the lyase 1 family. Argininosuccinate lyase subfamily.

Its subcellular location is the cytoplasm. It catalyses the reaction 2-(N(omega)-L-arginino)succinate = fumarate + L-arginine. Its pathway is amino-acid biosynthesis; L-arginine biosynthesis; L-arginine from L-ornithine and carbamoyl phosphate: step 3/3. This chain is Argininosuccinate lyase, found in Cereibacter sphaeroides (strain ATCC 17023 / DSM 158 / JCM 6121 / CCUG 31486 / LMG 2827 / NBRC 12203 / NCIMB 8253 / ATH 2.4.1.) (Rhodobacter sphaeroides).